The following is a 424-amino-acid chain: UPF0053 protein MG146 homolog (424 aa).

One can recognise a CNNM transmembrane domain in the interval 6 to 191 (SGGLLALIII…EQNGLFTKED (186 aa)). A run of 4 helical transmembrane segments spans residues 7–27 (GGLL…SAVV), 71–91 (LITI…ILFL), 101–121 (AISS…LCEI), and 135–155 (LVYF…ITKL). CBS domains lie at 210 to 270 (MIKW…NEPF) and 275 to 335 (LLYP…EHDE).

The protein belongs to the UPF0053 family.

Its subcellular location is the cell membrane. The sequence is that of UPF0053 protein MG146 homolog from Mycoplasma pneumoniae (strain ATCC 29342 / M129 / Subtype 1) (Mycoplasmoides pneumoniae).